The primary structure comprises 400 residues: Sensor histidine kinase LnrJ (400 aa).

Over Met-1–Lys-2 the chain is Extracellular. Residues Ala-3–Val-23 traverse the membrane as a helical segment. The Cytoplasmic portion of the chain corresponds to Lys-24–Asn-27. A helical membrane pass occupies residues Trp-28–Leu-48. Over Thr-49–Asp-61 the chain is Extracellular. The helical transmembrane segment at Ile-62 to Leu-82 threads the bilayer. Over Cys-83–Ser-101 the chain is Cytoplasmic. Residues Val-102–Gly-122 form a helical membrane-spanning segment. The Extracellular portion of the chain corresponds to Asn-123–Phe-125. A helical transmembrane segment spans residues Val-126–Ile-146. The Cytoplasmic segment spans residues Arg-147 to Ser-400. The Histidine kinase domain occupies Ile-190–Asn-385. Position 201 is a phosphohistidine; by autocatalysis (His-201).

Autophosphorylated.

The protein localises to the cell membrane. It carries out the reaction ATP + protein L-histidine = ADP + protein N-phospho-L-histidine.. Functionally, required for resistance to linearmycins, a family of antibiotic-specialized metabolites produced by some streptomycetes. Member of the two-component regulatory system LnrJ/LnrK, which induces expression of the LnrLMN ABC transporter in response to linearmycins and other polyenes. Acts as a specific sensor for linearmycin, either directly through binding or indirectly through membrane perturbation. Probably activates LnrK by phosphorylation. May also promote biofilm formation. This is Sensor histidine kinase LnrJ from Bacillus subtilis (strain 168).